A 513-amino-acid chain; its full sequence is OBERON-like protein (513 aa).

The PHD-type zinc finger occupies 166 to 235 (NGFCNLCMCV…VFRCQACSXT (70 aa)). The stretch at 372-469 (RELADKAREA…LYEKIKLQES (98 aa)) forms a coiled coil. Positions 493–513 (YNGPPKADSQSNDCHPFRTNP) are disordered. The segment covering 500–513 (DSQSNDCHPFRTNP) has biased composition (polar residues).

As to quaternary structure, self-interacts and probably forms heteromers. Binds to VPg of pea seed borne mosaic virus (PSbMV), turnip mosaic virus (TuMV) and lettuce mosaic virus (LMV), but not with VPg of tobacco etch virus (TEV), cowpea mosaic virus (CPMV), tomato black ring virus (TBRV) and grapevine fan leaf virus (GFLV).

It localises to the nucleus. Required for the maintenance and/or establishment of both the shoot and root meristems, probably by controlling the expression of the meristem genes and of genes required for auxin responses. Involved in the development of the basal pole and in auxin-mediated root and vascular development in the embryo. Confers sensitivity to turnip mosaic virus (TuMV) probably by promoting viral movement and multiplication via interaction with TuMV VPg. This Pisum sativum (Garden pea) protein is OBERON-like protein (PVIP).